The following is a 563-amino-acid chain: F-box/kelch-repeat protein At5g42360 (563 aa).

Positions 129–175 (YRKHVYLPDDILEMCLMRLPLTSLLNAHLVCKKWQSMANTQRFLQMR) constitute an F-box domain. Kelch repeat units lie at residues 184–231 (WLFL…SIHE), 232–282 (EIYI…ATEV), and 355–402 (VLIA…IICN).

The chain is F-box/kelch-repeat protein At5g42360 from Arabidopsis thaliana (Mouse-ear cress).